The chain runs to 149 residues: Putative glycine cleavage system H protein 3 (149 aa).

Residues 39–121 (TCTLGITKYA…EDKGWLIKME (83 aa)) enclose the Lipoyl-binding domain. Position 80 is an N6-lipoyllysine (K80).

The protein belongs to the GcvH family. As to quaternary structure, the glycine cleavage system is composed of four proteins: P, T, L and H. The cofactor is (R)-lipoate.

Its function is as follows. The glycine cleavage system catalyzes the degradation of glycine. The H protein shuttles the methylamine group of glycine from the P protein to the T protein. This chain is Putative glycine cleavage system H protein 3 (gcvH3), found in Dictyostelium discoideum (Social amoeba).